Consider the following 490-residue polypeptide: Protein nucleotidyltransferase YdiU (490 aa).

ATP-binding residues include glycine 89, glycine 91, arginine 92, lysine 112, aspartate 124, glycine 125, arginine 175, and arginine 182. The Proton acceptor role is filled by aspartate 251. The Mg(2+) site is built by asparagine 252 and aspartate 261. Position 261 (aspartate 261) interacts with ATP.

It belongs to the SELO family. Mg(2+) is required as a cofactor. Mn(2+) serves as cofactor.

The enzyme catalyses L-seryl-[protein] + ATP = 3-O-(5'-adenylyl)-L-seryl-[protein] + diphosphate. It catalyses the reaction L-threonyl-[protein] + ATP = 3-O-(5'-adenylyl)-L-threonyl-[protein] + diphosphate. The catalysed reaction is L-tyrosyl-[protein] + ATP = O-(5'-adenylyl)-L-tyrosyl-[protein] + diphosphate. It carries out the reaction L-histidyl-[protein] + UTP = N(tele)-(5'-uridylyl)-L-histidyl-[protein] + diphosphate. The enzyme catalyses L-seryl-[protein] + UTP = O-(5'-uridylyl)-L-seryl-[protein] + diphosphate. It catalyses the reaction L-tyrosyl-[protein] + UTP = O-(5'-uridylyl)-L-tyrosyl-[protein] + diphosphate. In terms of biological role, nucleotidyltransferase involved in the post-translational modification of proteins. It can catalyze the addition of adenosine monophosphate (AMP) or uridine monophosphate (UMP) to a protein, resulting in modifications known as AMPylation and UMPylation. The chain is Protein nucleotidyltransferase YdiU from Vibrio vulnificus (strain CMCP6).